A 147-amino-acid polypeptide reads, in one-letter code: UPF0735 ACT domain-containing protein YszB (147 aa).

Positions 70–145 (TLFFHLEDRS…FVEKVEILGS (76 aa)) constitute an ACT domain.

This sequence belongs to the UPF0735 family.

This is UPF0735 ACT domain-containing protein YszB (yszB) from Bacillus subtilis (strain 168).